A 364-amino-acid polypeptide reads, in one-letter code: Dual-specificity RNA methyltransferase RlmN (364 aa).

The Proton acceptor role is filled by Glu91. Residues 97 to 333 (ESDRGTLCIS…VTVRKTRGDD (237 aa)) enclose the Radical SAM core domain. Cysteines 104 and 338 form a disulfide. [4Fe-4S] cluster is bound by residues Cys111, Cys115, and Cys118. S-adenosyl-L-methionine is bound by residues 164–165 (GE), Ser196, 218–220 (SLH), and Asn295. Cys338 acts as the S-methylcysteine intermediate in catalysis.

The protein belongs to the radical SAM superfamily. RlmN family. The cofactor is [4Fe-4S] cluster.

It is found in the cytoplasm. It carries out the reaction adenosine(2503) in 23S rRNA + 2 reduced [2Fe-2S]-[ferredoxin] + 2 S-adenosyl-L-methionine = 2-methyladenosine(2503) in 23S rRNA + 5'-deoxyadenosine + L-methionine + 2 oxidized [2Fe-2S]-[ferredoxin] + S-adenosyl-L-homocysteine. The enzyme catalyses adenosine(37) in tRNA + 2 reduced [2Fe-2S]-[ferredoxin] + 2 S-adenosyl-L-methionine = 2-methyladenosine(37) in tRNA + 5'-deoxyadenosine + L-methionine + 2 oxidized [2Fe-2S]-[ferredoxin] + S-adenosyl-L-homocysteine. In terms of biological role, specifically methylates position 2 of adenine 2503 in 23S rRNA and position 2 of adenine 37 in tRNAs. m2A2503 modification seems to play a crucial role in the proofreading step occurring at the peptidyl transferase center and thus would serve to optimize ribosomal fidelity. The chain is Dual-specificity RNA methyltransferase RlmN from Neisseria meningitidis serogroup C / serotype 2a (strain ATCC 700532 / DSM 15464 / FAM18).